Here is a 58-residue protein sequence, read N- to C-terminus: Keratin-associated protein 21-3 (58 aa).

In terms of assembly, interacts with hair keratins.

In terms of biological role, in the hair cortex, hair keratin intermediate filaments are embedded in an interfilamentous matrix, consisting of hair keratin-associated proteins (KRTAP), which are essential for the formation of a rigid and resistant hair shaft through their extensive disulfide bond cross-linking with abundant cysteine residues of hair keratins. The matrix proteins include the high-sulfur and high-glycine-tyrosine keratins. This chain is Keratin-associated protein 21-3 (KRTAP21-3), found in Homo sapiens (Human).